Consider the following 131-residue polypeptide: Small ribosomal subunit protein uS11 (131 aa).

The protein belongs to the universal ribosomal protein uS11 family. Part of the 30S ribosomal subunit. Interacts with proteins S7 and S18. Binds to IF-3.

Functionally, located on the platform of the 30S subunit, it bridges several disparate RNA helices of the 16S rRNA. Forms part of the Shine-Dalgarno cleft in the 70S ribosome. In Chromobacterium violaceum (strain ATCC 12472 / DSM 30191 / JCM 1249 / CCUG 213 / NBRC 12614 / NCIMB 9131 / NCTC 9757 / MK), this protein is Small ribosomal subunit protein uS11.